The primary structure comprises 393 residues: F-box protein KIB4 (393 aa).

Residues 12-59 enclose the F-box domain; it reads AKQPILVLDLVRLVLERLSFVDFHRARCVSSVWYSASKSCIGGTNPTA.

It is found in the cytoplasm. The protein resides in the nucleus. It localises to the nucleolus. In terms of biological role, component of SCF(ASK-cullin-F-box) E3 ubiquitin ligase complexes, which may mediate the ubiquitination and subsequent proteasomal degradation of target proteins. Required for brassinosteroid (BR) signal transduction. Mediates ASK7/BIN2/SK21 inactivation both by competing with substrate binding (e.g. BZR1) and by promoting its ubiquitination and subsequent proteasomal degradation. This chain is F-box protein KIB4, found in Arabidopsis thaliana (Mouse-ear cress).